Consider the following 217-residue polypeptide: 3,4-dihydroxy-2-butanone 4-phosphate synthase (217 aa).

D-ribulose 5-phosphate-binding positions include 37 to 38 (RE), Asp42, 150 to 154 (RRGHT), and Glu174. Position 38 (Glu38) interacts with Mg(2+). His153 serves as a coordination point for Mg(2+).

This sequence belongs to the DHBP synthase family. As to quaternary structure, homodimer. Mg(2+) is required as a cofactor. The cofactor is Mn(2+).

The catalysed reaction is D-ribulose 5-phosphate = (2S)-2-hydroxy-3-oxobutyl phosphate + formate + H(+). It participates in cofactor biosynthesis; riboflavin biosynthesis; 2-hydroxy-3-oxobutyl phosphate from D-ribulose 5-phosphate: step 1/1. Its function is as follows. Catalyzes the conversion of D-ribulose 5-phosphate to formate and 3,4-dihydroxy-2-butanone 4-phosphate. The polypeptide is 3,4-dihydroxy-2-butanone 4-phosphate synthase (Shewanella sp. (strain W3-18-1)).